The chain runs to 230 residues: Phosphatidate cytidylyltransferase (230 aa).

The next 6 membrane-spanning stretches (helical) occupy residues 33-53, 67-87, 95-115, 133-153, 167-187, and 206-226; these read FVIA…LVGT, IPDL…LIFL, WLIM…MIGG, WSGL…VSFI, IYLF…DLFI, and HGGV…LFLM.

It belongs to the CDS family.

It is found in the cell membrane. The enzyme catalyses a 1,2-diacyl-sn-glycero-3-phosphate + CTP + H(+) = a CDP-1,2-diacyl-sn-glycerol + diphosphate. It functions in the pathway phospholipid metabolism; CDP-diacylglycerol biosynthesis; CDP-diacylglycerol from sn-glycerol 3-phosphate: step 3/3. The protein is Phosphatidate cytidylyltransferase (cdsA) of Rickettsia conorii (strain ATCC VR-613 / Malish 7).